The following is a 93-amino-acid chain: Small ribosomal subunit protein uS19m (93 aa).

The protein belongs to the universal ribosomal protein uS19 family.

Its subcellular location is the mitochondrion. This is Small ribosomal subunit protein uS19m (RPS19) from Marchantia polymorpha (Common liverwort).